An 85-amino-acid polypeptide reads, in one-letter code: Cell division protein ZapA (85 aa).

A coiled-coil region spans residues 60–85 (AVNVVHDYLKLKEELERLKGQIKEKD).

The protein belongs to the ZapA family. Type 2 subfamily. In terms of assembly, homodimer. Interacts with FtsZ.

The protein resides in the cytoplasm. Activator of cell division through the inhibition of FtsZ GTPase activity, therefore promoting FtsZ assembly into bundles of protofilaments necessary for the formation of the division Z ring. It is recruited early at mid-cell but it is not essential for cell division. This Bacillus licheniformis (strain ATCC 14580 / DSM 13 / JCM 2505 / CCUG 7422 / NBRC 12200 / NCIMB 9375 / NCTC 10341 / NRRL NRS-1264 / Gibson 46) protein is Cell division protein ZapA.